A 225-amino-acid polypeptide reads, in one-letter code: Small ribosomal subunit protein uS7 (225 aa).

The protein belongs to the universal ribosomal protein uS7 family. In terms of assembly, component of the small ribosomal subunit. Mature ribosomes consist of a small (40S) and a large (60S) subunit. The 40S subunit contains about 32 different proteins and 1 molecule of RNA (18S). The 60S subunit contains 45 different proteins and 3 molecules of RNA (25S, 5.8S and 5S).

It localises to the cytoplasm. Functionally, component of the ribosome, a large ribonucleoprotein complex responsible for the synthesis of proteins in the cell. The small ribosomal subunit (SSU) binds messenger RNAs (mRNAs) and translates the encoded message by selecting cognate aminoacyl-transfer RNA (tRNA) molecules. The large subunit (LSU) contains the ribosomal catalytic site termed the peptidyl transferase center (PTC), which catalyzes the formation of peptide bonds, thereby polymerizing the amino acids delivered by tRNAs into a polypeptide chain. The nascent polypeptides leave the ribosome through a tunnel in the LSU and interact with protein factors that function in enzymatic processing, targeting, and the membrane insertion of nascent chains at the exit of the ribosomal tunnel. In Candida albicans (strain SC5314 / ATCC MYA-2876) (Yeast), this protein is Small ribosomal subunit protein uS7 (RPS5).